The chain runs to 470 residues: ATP synthase subunit beta (470 aa).

157–164 contributes to the ATP binding site; that stretch reads GGAGVGKT.

It belongs to the ATPase alpha/beta chains family. As to quaternary structure, F-type ATPases have 2 components, CF(1) - the catalytic core - and CF(0) - the membrane proton channel. CF(1) has five subunits: alpha(3), beta(3), gamma(1), delta(1), epsilon(1). CF(0) has three main subunits: a(1), b(2) and c(9-12). The alpha and beta chains form an alternating ring which encloses part of the gamma chain. CF(1) is attached to CF(0) by a central stalk formed by the gamma and epsilon chains, while a peripheral stalk is formed by the delta and b chains.

The protein resides in the cell inner membrane. The enzyme catalyses ATP + H2O + 4 H(+)(in) = ADP + phosphate + 5 H(+)(out). Functionally, produces ATP from ADP in the presence of a proton gradient across the membrane. The catalytic sites are hosted primarily by the beta subunits. The chain is ATP synthase subunit beta from Citrifermentans bemidjiense (strain ATCC BAA-1014 / DSM 16622 / JCM 12645 / Bem) (Geobacter bemidjiensis).